The primary structure comprises 122 residues: Large ribosomal subunit protein uL18 (122 aa).

It belongs to the universal ribosomal protein uL18 family. In terms of assembly, part of the 50S ribosomal subunit; part of the 5S rRNA/L5/L18/L25 subcomplex. Contacts the 5S and 23S rRNAs.

Its function is as follows. This is one of the proteins that bind and probably mediate the attachment of the 5S RNA into the large ribosomal subunit, where it forms part of the central protuberance. The protein is Large ribosomal subunit protein uL18 of Kosmotoga olearia (strain ATCC BAA-1733 / DSM 21960 / TBF 19.5.1).